We begin with the raw amino-acid sequence, 399 residues long: S-adenosylmethionine synthase (399 aa).

H17 is a binding site for ATP. D19 serves as a coordination point for Mg(2+). Position 52 (E52) interacts with K(+). Residues E65 and Q109 each contribute to the L-methionine site. The interval Q109–A119 is flexible loop. Residues D177–K179, K243–F244, D252, R258–K259, A275, and K279 each bind ATP. An L-methionine-binding site is contributed by D252. K283 serves as a coordination point for L-methionine.

This sequence belongs to the AdoMet synthase family. In terms of assembly, homotetramer; dimer of dimers. Mg(2+) serves as cofactor. It depends on K(+) as a cofactor.

The protein localises to the cytoplasm. The enzyme catalyses L-methionine + ATP + H2O = S-adenosyl-L-methionine + phosphate + diphosphate. It functions in the pathway amino-acid biosynthesis; S-adenosyl-L-methionine biosynthesis; S-adenosyl-L-methionine from L-methionine: step 1/1. In terms of biological role, catalyzes the formation of S-adenosylmethionine (AdoMet) from methionine and ATP. The overall synthetic reaction is composed of two sequential steps, AdoMet formation and the subsequent tripolyphosphate hydrolysis which occurs prior to release of AdoMet from the enzyme. In Bradyrhizobium sp. (strain ORS 278), this protein is S-adenosylmethionine synthase.